The following is a 230-amino-acid chain: MKIGIIGAMEPEVAHLVESMENPSSTTIAGIEFVAGQLAGKDVVVTRSGIGKVTASIATTLLIEKYAPDAIINTGSAGGFADELAIGDIVISSEVRHHDVDVTAFGYEIGQMAQQPAAFIPDTALVTAAQKAVASLGEVKAIEGLICTGDSFICDPVRTKTMLEHFPTMAACEMEGAAIAQVCHQFDVPFVVIRSLSDNANNDSPVDFDEYLVKAGHHSALMVIALLEQL.

The active-site Proton acceptor is E12. Residues G78, I153, and 174 to 175 each bind substrate; that span reads ME. The active-site Proton donor is the D198.

This sequence belongs to the PNP/UDP phosphorylase family. MtnN subfamily.

The catalysed reaction is S-adenosyl-L-homocysteine + H2O = S-(5-deoxy-D-ribos-5-yl)-L-homocysteine + adenine. It carries out the reaction S-methyl-5'-thioadenosine + H2O = 5-(methylsulfanyl)-D-ribose + adenine. It catalyses the reaction 5'-deoxyadenosine + H2O = 5-deoxy-D-ribose + adenine. It functions in the pathway amino-acid biosynthesis; L-methionine biosynthesis via salvage pathway; S-methyl-5-thio-alpha-D-ribose 1-phosphate from S-methyl-5'-thioadenosine (hydrolase route): step 1/2. Catalyzes the irreversible cleavage of the glycosidic bond in both 5'-methylthioadenosine (MTA) and S-adenosylhomocysteine (SAH/AdoHcy) to adenine and the corresponding thioribose, 5'-methylthioribose and S-ribosylhomocysteine, respectively. Also cleaves 5'-deoxyadenosine, a toxic by-product of radical S-adenosylmethionine (SAM) enzymes, into 5-deoxyribose and adenine. In Shewanella sediminis (strain HAW-EB3), this protein is 5'-methylthioadenosine/S-adenosylhomocysteine nucleosidase.